The chain runs to 338 residues: MIKQLYKNITICSLTISTALTVFPATSYAKINSEIKAVSEKNLDGDTKMYTRTATTSDSQKNITQSLQFNFLTEPNYDKETVFIKAKGTIGSGLRILDPNGYWNSTLRWPGSYSVSIQNVDDNNNTNVTDFAPKNQDESREVKYTYGYKTGGDFSINRGGLPGNITKESNYSETISYQQPSYRTLLDQSTSHKGVGWKVEAHLINNMGHDHTRQLTNDSDNRTKSEIFSLTRNGNLWAKDNFTPKNKMPVTVSEGFNPEFLAVMSHDKKDEGKSKFVVHYKRSMDEFKIDWNRHGFWGYWSGENHVDKKEEKLSALYEVDWKTHDVKFVKVLNDNEKK.

The signal sequence occupies residues 1–29 (MIKQLYKNITICSLTISTALTVFPATSYA).

Belongs to the aerolysin family.

This is an uncharacterized protein from Staphylococcus aureus (strain bovine RF122 / ET3-1).